The following is a 269-amino-acid chain: Putative pyruvate, phosphate dikinase regulatory protein (269 aa).

151-158 (GVSRSSKT) is an ADP binding site.

This sequence belongs to the pyruvate, phosphate/water dikinase regulatory protein family. PDRP subfamily.

It catalyses the reaction N(tele)-phospho-L-histidyl/L-threonyl-[pyruvate, phosphate dikinase] + ADP = N(tele)-phospho-L-histidyl/O-phospho-L-threonyl-[pyruvate, phosphate dikinase] + AMP + H(+). The catalysed reaction is N(tele)-phospho-L-histidyl/O-phospho-L-threonyl-[pyruvate, phosphate dikinase] + phosphate + H(+) = N(tele)-phospho-L-histidyl/L-threonyl-[pyruvate, phosphate dikinase] + diphosphate. Its function is as follows. Bifunctional serine/threonine kinase and phosphorylase involved in the regulation of the pyruvate, phosphate dikinase (PPDK) by catalyzing its phosphorylation/dephosphorylation. This is Putative pyruvate, phosphate dikinase regulatory protein from Geobacter sulfurreducens (strain ATCC 51573 / DSM 12127 / PCA).